A 524-amino-acid chain; its full sequence is Nucleobase-ascorbate transporter 2 (524 aa).

12 consecutive transmembrane segments (helical) span residues 41 to 61 (YILALGTAVMIPSILVPMMGG), 69 to 89 (VVQTLLFLQGVNTLLQTLFGT), 91 to 111 (LPTVIGGSYAFMVPIISIIHD), 133 to 153 (GAIIVASSVQIILGFSQMWAI), 155 to 175 (SRFFSPIGMVPVIALTGFGLF), 179 to 199 (FPVVGNCVEIGLPMLILFVIF), 217 to 237 (FALIIALIIVWAYAHVLTASG), 282 to 302 (AFAMMAAVLVSLIESTGAFKA), 359 to 379 (RVIQISAGFMIFFSMLGKFGA), 380 to 400 (LFASIPFTIFAAVYCVLFGLV), 419 to 439 (LFIVGVSLFLGLSIPEYFRDF), and 457 to 477 (DFLNTIFLSSPMVALMVAVFL).

It belongs to the nucleobase:cation symporter-2 (NCS2) (TC 2.A.40) family. In terms of tissue distribution, expressed in cotyledons 10 days after imbibition (DAI). Expressed in the minor and major veins of cotyledons and leaves, in the shoot apex and pedicels. Expressed in the root meristems, root tips and lateral root primordia.

It is found in the membrane. This Arabidopsis thaliana (Mouse-ear cress) protein is Nucleobase-ascorbate transporter 2 (NAT2).